A 493-amino-acid chain; its full sequence is MQFKQDFFEQLEGFYSQVYPLPISNPHWLGWSDDAAQLIGLEKPNAELLMQLSANYAAPGASYYAQVYSGHQFGGYTPRLGDGRSIILGEAIGPNGAWDVALKGGGPTPYSRQGDGRAVMRSAVREFLVSEALAALNVPTSRALAVIGSDLPVWRESQETAAITVRLAKSHIRFGHFEYFFHSEQGDAAKLTQLVNFTIQQHFPHLSTDAAGYKQWFYEVVQSTAKMIAHWQSVGFAHGVMNTDNMSILGDTFDFGPFAFLDTFKEGFICNHSDHEGRYAFGQQPGIGLWNLKRLAQTLTPIIESDDLIAALNTYQFELVQQYLLLMRAKLGFSQPNQSPNAINAEEQADLGNKDLQLVGQLTGLLETNQLDYTNSLRRFGQLDPSSAHSSLRDDMVDLAGFDTWYQAYQSRVGEVADVNAWQCERNSANPKYILRNYLAQEAIIAIEENGDNSKLLQLQQLLQRPFDEQSEMEDFAKRPPQWGQGLIMSCSS.

Residues Gly81, Gly83, Arg84, Lys103, Asp115, Gly116, Arg166, and Arg173 each coordinate ATP. Asp244 (proton acceptor) is an active-site residue. Mg(2+) contacts are provided by Asn245 and Asp254. Residue Asp254 participates in ATP binding.

The protein belongs to the SELO family. It depends on Mg(2+) as a cofactor. Mn(2+) serves as cofactor.

The catalysed reaction is L-seryl-[protein] + ATP = 3-O-(5'-adenylyl)-L-seryl-[protein] + diphosphate. The enzyme catalyses L-threonyl-[protein] + ATP = 3-O-(5'-adenylyl)-L-threonyl-[protein] + diphosphate. It carries out the reaction L-tyrosyl-[protein] + ATP = O-(5'-adenylyl)-L-tyrosyl-[protein] + diphosphate. It catalyses the reaction L-histidyl-[protein] + UTP = N(tele)-(5'-uridylyl)-L-histidyl-[protein] + diphosphate. The catalysed reaction is L-seryl-[protein] + UTP = O-(5'-uridylyl)-L-seryl-[protein] + diphosphate. The enzyme catalyses L-tyrosyl-[protein] + UTP = O-(5'-uridylyl)-L-tyrosyl-[protein] + diphosphate. Its function is as follows. Nucleotidyltransferase involved in the post-translational modification of proteins. It can catalyze the addition of adenosine monophosphate (AMP) or uridine monophosphate (UMP) to a protein, resulting in modifications known as AMPylation and UMPylation. The chain is Protein nucleotidyltransferase YdiU from Shewanella frigidimarina (strain NCIMB 400).